Reading from the N-terminus, the 269-residue chain is Imidazole glycerol phosphate synthase subunit HisF (269 aa).

Active-site residues include Asp-23 and Asp-142.

The protein belongs to the HisA/HisF family. In terms of assembly, heterodimer of HisH and HisF.

The protein resides in the cytoplasm. The catalysed reaction is 5-[(5-phospho-1-deoxy-D-ribulos-1-ylimino)methylamino]-1-(5-phospho-beta-D-ribosyl)imidazole-4-carboxamide + L-glutamine = D-erythro-1-(imidazol-4-yl)glycerol 3-phosphate + 5-amino-1-(5-phospho-beta-D-ribosyl)imidazole-4-carboxamide + L-glutamate + H(+). Its pathway is amino-acid biosynthesis; L-histidine biosynthesis; L-histidine from 5-phospho-alpha-D-ribose 1-diphosphate: step 5/9. Functionally, IGPS catalyzes the conversion of PRFAR and glutamine to IGP, AICAR and glutamate. The HisF subunit catalyzes the cyclization activity that produces IGP and AICAR from PRFAR using the ammonia provided by the HisH subunit. The chain is Imidazole glycerol phosphate synthase subunit HisF from Bordetella pertussis (strain Tohama I / ATCC BAA-589 / NCTC 13251).